The following is a 192-amino-acid chain: Iodate reductase subunit IdrB (192 aa).

Residues Met-1–Val-52 constitute a signal peptide (tat-type signal). The Rieske domain maps to Gly-102 to Ala-173. Cys-114, His-116, Cys-135, and His-138 together coordinate [2Fe-2S] cluster.

This sequence belongs to the AOX family. The iodate reductase (Idr) complex is composed of a molybdopterin-dependent iodate reductase (IdrA and IdrB subunits) and two associated peroxidases (IdrP1 and IdrP2). [2Fe-2S] cluster serves as cofactor. In terms of processing, predicted to be exported by the Tat system. The position of the signal peptide cleavage has not been experimentally proven.

It is found in the periplasm. Its function is as follows. Involved in iodate respiration. Probably catalyzes the reduction of iodate (IO(3)(-)) to hypoiodous acid (HIO) and H(2)O(2), using a reduced cytochrome c as the electron donor. The protein is Iodate reductase subunit IdrB of Pseudomonas sp. (strain SCT).